Reading from the N-terminus, the 921-residue chain is Sodium/calcium exchanger 2 (921 aa).

The first 20 residues, 1–20 (MAPLALVGVALLLGAPHCLG), serve as a signal peptide directing secretion. Over 21–68 (EATPTPSLPPPPANDSDASPGGCQGSYRCQPGVLLPVWEPDDPSLGDK) the chain is Extracellular. The segment at 23-42 (TPTPSLPPPPANDSDASPGG) is disordered. The N-linked (GlcNAc...) asparagine glycan is linked to N34. A helical transmembrane segment spans residues 69 to 90 (AARAVVYFVAMVYMFLGLSIIA). At 91 to 130 (DRFMASIEVITSKEKEITITKANGETSVGTVRIWNETVSN) the chain is on the cytoplasmic side. Residues 131–152 (LTLMALGSSAPEILLSVIEVCG) traverse the membrane as a helical segment. An Alpha-1 repeat occupies 135-175 (ALGSSAPEILLSVIEVCGHNFQAGELGPGTIVGSAAFNMFV). The Extracellular portion of the chain corresponds to 153 to 164 (HNFQAGELGPGT). The chain crosses the membrane as a helical span at residues 165-185 (IVGSAAFNMFVVIAVCVYVIP). Over 186 to 196 (AGESRKIKHLR) the chain is Cytoplasmic. The chain crosses the membrane as a helical span at residues 197 to 219 (VFFVTASWSIFAYVWLYLILAVF). Residues 220-222 (SPG) are Extracellular-facing. Residues 223–246 (VVQVWEALLTLVFFPVCVVFAWMA) traverse the membrane as a helical segment. The Cytoplasmic segment spans residues 247 to 720 (DKRLLFYKYV…DGSREERLPS (474 aa)). Residues 248–267 (KRLLFYKYVYKRYRTDPRSG) are putative calmodulin-binding region. Positions 372–391 (AADAARRPGANDGAPDDEDD) are disordered. Calx-beta domains follow at residues 384 to 483 (GAPD…VRLL) and 512 to 612 (ATVT…IELG). Residues E407, D443, D468, D469, I471, E473, E476, D518, D519, D520, E536, D598, E599, and E600 each coordinate Ca(2+). S622 carries the post-translational modification Phosphoserine. Residue E665 participates in Ca(2+) binding. The chain crosses the membrane as a helical span at residues 721–740 (CFDYVMHFLTVFWKVLFACL). At 741 to 747 (PPTEYCH) the chain is on the extracellular side. The chain crosses the membrane as a helical span at residues 748–770 (GWACFGVCILVIGLLTALIGDLA). Residues 771-772 (SH) lie on the Cytoplasmic side of the membrane. Residues 773–791 (FGCTVGLKDSVNAVVFVAL) form a helical membrane-spanning segment. Residues 790–826 (ALGTSIPDTFASKVAALQDQCADASIGNVTGSNAVNV) form an Alpha-2 repeat. Topologically, residues 792-822 (GTSIPDTFASKVAALQDQCADASIGNVTGSN) are extracellular. N817 is a glycosylation site (N-linked (GlcNAc...) asparagine). A helical membrane pass occupies residues 823-843 (AVNVFLGLGVAWSVAAVYWAV). Residues 844–854 (QGRPFEVRTGT) lie on the Cytoplasmic side of the membrane. Residues 855-875 (LAFSVTLFTVFAFVGIAVLLY) form a helical membrane-spanning segment. The Extracellular portion of the chain corresponds to 876 to 892 (RRRPHIGGELGGPRGPK). The helical transmembrane segment at 893 to 909 (LATTALFLGLWFLYILF) threads the bilayer. Over 910-921 (ASLEAYCHIRGF) the chain is Cytoplasmic.

It belongs to the Ca(2+):cation antiporter (CaCA) (TC 2.A.19) family. SLC8 subfamily. In terms of tissue distribution, detected in neocortex and hippocampus on pyramidal cells, astrocyte processes and dendrites (at protein level). Brain and skeletal muscle.

It localises to the cell membrane. Its subcellular location is the basolateral cell membrane. The protein resides in the perikaryon. The protein localises to the cell projection. It is found in the dendrite. It localises to the dendritic spine. The enzyme catalyses Ca(2+)(in) + 3 Na(+)(out) = Ca(2+)(out) + 3 Na(+)(in). With respect to regulation, calcium transport is down-regulated by Na(+) and stimulated by Ca(2+). In terms of biological role, mediates the electrogenic exchange of Ca(2+) against Na(+) ions across the cell membrane, and thereby contributes to the regulation of cytoplasmic Ca(2+) levels and Ca(2+)-dependent cellular processes. Contributes to cellular Ca(2+) homeostasis in excitable cells. Contributes to the rapid decrease of cytoplasmic Ca(2+) levels back to baseline after neuronal activation, and thereby contributes to modulate synaptic plasticity, learning and memory. Plays a role in regulating urinary Ca(2+) and Na(+) excretion. This Rattus norvegicus (Rat) protein is Sodium/calcium exchanger 2 (Slc8a2).